The primary structure comprises 420 residues: 3-isopropylmalate dehydratase large subunit (420 aa).

3 residues coordinate [4Fe-4S] cluster: cysteine 300, cysteine 360, and cysteine 363.

It belongs to the aconitase/IPM isomerase family. LeuC type 2 subfamily. Heterodimer of LeuC and LeuD. [4Fe-4S] cluster serves as cofactor.

The catalysed reaction is (2R,3S)-3-isopropylmalate = (2S)-2-isopropylmalate. It functions in the pathway amino-acid biosynthesis; L-leucine biosynthesis; L-leucine from 3-methyl-2-oxobutanoate: step 2/4. Functionally, catalyzes the isomerization between 2-isopropylmalate and 3-isopropylmalate, via the formation of 2-isopropylmaleate. The protein is 3-isopropylmalate dehydratase large subunit of Heliobacterium modesticaldum (strain ATCC 51547 / Ice1).